The primary structure comprises 188 residues: Trafficking protein particle complex subunit 5 (188 aa).

It belongs to the TRAPP small subunits family. BET3 subfamily. In terms of assembly, part of the multisubunit TRAPP (transport protein particle) complex.

Its subcellular location is the golgi apparatus. It is found in the cis-Golgi network. The protein resides in the endoplasmic reticulum. In terms of biological role, may play a role in vesicular transport from endoplasmic reticulum to Golgi. The sequence is that of Trafficking protein particle complex subunit 5 (TRAPPC5) from Gallus gallus (Chicken).